A 205-amino-acid chain; its full sequence is Tic20 family protein Ycf60 (205 aa).

The next 5 membrane-spanning stretches (helical) occupy residues 5 to 25 (LFVN…VILI), 54 to 74 (AISC…FGIV), 102 to 122 (LIGF…IIQI), 130 to 150 (IVQA…LTSL), and 163 to 183 (LADT…TDAL).

This sequence belongs to the Tic20 family.

It is found in the plastid. The protein resides in the chloroplast membrane. In Cyanidium caldarium (Red alga), this protein is Tic20 family protein Ycf60 (ycf60).